A 916-amino-acid chain; its full sequence is DNA topoisomerase 1 alpha (916 aa).

A disordered region spans residues 1-369; that stretch reads MGTETVSKPV…SSPSSGDGQK (369 aa). Residues 34–47 show a composition bias toward low complexity; that stretch reads SNSNQSKSNSQRSK. Residues 60 to 76 show a composition bias toward polar residues; sequence PVTSPNGTTPSNKTSIV. The span at 77–93 shows a compositional bias: low complexity; the sequence is KSSMPSSSSKASPAKSP. The span at 102–119 shows a compositional bias: basic and acidic residues; the sequence is VKDRSQLQKDQSECKIEH. The segment covering 130 to 148 has biased composition (polar residues); sequence SILSGNKGPTSSRQVSSPQ. Basic and acidic residues predominate over residues 149 to 168; that stretch reads PEKKNNGDRPLDRASRIIKD. S170 carries the post-translational modification Phosphoserine. The span at 230–239 shows a compositional bias: polar residues; the sequence is KNSSADQSSL. Positions 253–267 are enriched in basic and acidic residues; that stretch reads MKQDSVKKEIDDKGR. Over residues 285 to 294 the composition is skewed to acidic residues; sequence GTDDDDDDDV. T286 carries the phosphothreonine modification. The span at 354–366 shows a compositional bias: low complexity; that stretch reads YSTSSKSSPSSGD. Interaction with DNA stretches follow at residues 577 to 578, 640 to 645, and 731 to 733; these read KY, RAGNEK, and TAK. Residues 584–914 form the Topo IB-type catalytic domain; it reads GSSLKGLSDK…MDVEPEYRFS (331 aa). The stretch at 778-860 forms a coiled coil; the sequence is QRTVSKTHGA…ERDMHTKEDL (83 aa). Y872 functions as the O-(3'-phospho-DNA)-tyrosine intermediate in the catalytic mechanism.

The protein belongs to the type IB topoisomerase family. Interacts with DEK3. As to expression, expressed in inflorescence meristems. Expressed in primordia of sepals, petals, stamens, carpels and ovules. Expressed in midstage embryos.

It is found in the nucleus. The enzyme catalyses ATP-independent breakage of single-stranded DNA, followed by passage and rejoining.. Functionally, releases the supercoiling and torsional tension of DNA introduced during the DNA replication and transcription by transiently cleaving and rejoining one strand of the DNA duplex. Introduces a single-strand break via transesterification at a target site in duplex DNA. The scissile phosphodiester is attacked by the catalytic tyrosine of the enzyme, resulting in the formation of a DNA-(3'-phosphotyrosyl)-enzyme intermediate and the expulsion of a 5'-OH DNA strand. The free DNA strand then rotates around the intact phosphodiester bond on the opposing strand, thus removing DNA supercoils. Finally, in the religation step, the DNA 5'-OH attacks the covalent intermediate to expel the active-site tyrosine and restore the DNA phosphodiester backbone. Can complement a TOP1-deficient yeast mutant. Plays a critical role in the maintenance of a regular pattern of organ initiation. Topoisomerases I enzymes (TOP1A and TOP1B) are essential for plant survival. Functions together with the stem cell maintenance gene WUSCHEL (WUS) in stem cell regulation. Required to maintain developmentally regulated gene repression. Functions synergistically with chromatin remodeling factors. Is required for the repression of WUS expression in flower development. Plays a role in polycomb group (PcG) protein-mediated histone H3 trimethylation on 'Lys-27' (H3K27me3) at the WUS gene locus. H3K27me3 induces transcriptional repression of WUS. May assist AGAMOUS (AG) in recruiting PcG proteins to WUS locus. Reduces nucleosome density, especially at genes that are targets of PcG proteins. Plays a role in epigenetic silencing. Involved in RNA-directed DNA methylation (RdDM) by promoting Pol V transcription to generate long non-coding RNA transcripts. Is dispensable for Pol IV-mediated small interfering RNA (siRNA) biogenesis. Promotes transposable element (TE) silencing at endogenous RdDM target loci through histone H3 dimethylation of 'Lys-9' (H3K9me2). Promotes the production of Pol V-dependent long non-coding transcripts that facilitate the recruitment of siRNA-AGO4 and AGO4 occupancy at TEs. This Arabidopsis thaliana (Mouse-ear cress) protein is DNA topoisomerase 1 alpha.